Here is a 37-residue protein sequence, read N- to C-terminus: Cytochrome b6-f complex subunit 5 (37 aa).

Residues 5–25 (LLSGIVLGLVPVTIAGLFVTA) traverse the membrane as a helical segment.

This sequence belongs to the PetG family. In terms of assembly, the 4 large subunits of the cytochrome b6-f complex are cytochrome b6, subunit IV (17 kDa polypeptide, PetD), cytochrome f and the Rieske protein, while the 4 small subunits are PetG, PetL, PetM and PetN. The complex functions as a dimer.

It is found in the plastid. The protein localises to the chloroplast thylakoid membrane. Component of the cytochrome b6-f complex, which mediates electron transfer between photosystem II (PSII) and photosystem I (PSI), cyclic electron flow around PSI, and state transitions. PetG is required for either the stability or assembly of the cytochrome b6-f complex. The protein is Cytochrome b6-f complex subunit 5 of Chlamydomonas moewusii (Chlamydomonas eugametos).